Here is a 427-residue protein sequence, read N- to C-terminus: Adenylosuccinate synthetase (427 aa).

Residues 12–18 (GDEGKGK) and 40–42 (GHT) contribute to the GTP site. Asp13 acts as the Proton acceptor in catalysis. 2 residues coordinate Mg(2+): Asp13 and Gly40. Residues 13–16 (DEGK), 38–41 (NAGH), Thr128, Arg142, Gln223, Thr238, and Arg302 contribute to the IMP site. The active-site Proton donor is His41. 298 to 304 (TTTGRPR) is a binding site for substrate. Residues Arg304, 330–332 (SID), and 412–414 (SVG) each bind GTP.

The protein belongs to the adenylosuccinate synthetase family. Homodimer. Requires Mg(2+) as cofactor.

The protein resides in the cytoplasm. It carries out the reaction IMP + L-aspartate + GTP = N(6)-(1,2-dicarboxyethyl)-AMP + GDP + phosphate + 2 H(+). It participates in purine metabolism; AMP biosynthesis via de novo pathway; AMP from IMP: step 1/2. In terms of biological role, plays an important role in the de novo pathway of purine nucleotide biosynthesis. Catalyzes the first committed step in the biosynthesis of AMP from IMP. The sequence is that of Adenylosuccinate synthetase from Staphylococcus saprophyticus subsp. saprophyticus (strain ATCC 15305 / DSM 20229 / NCIMB 8711 / NCTC 7292 / S-41).